The primary structure comprises 211 residues: Thiamine-phosphate synthase (211 aa).

4-amino-2-methyl-5-(diphosphooxymethyl)pyrimidine is bound by residues 39-43 (QLREK) and Asn-71. Positions 72 and 91 each coordinate Mg(2+). Ser-110 contacts 4-amino-2-methyl-5-(diphosphooxymethyl)pyrimidine. Residue 136–138 (TAT) participates in 2-[(2R,5Z)-2-carboxy-4-methylthiazol-5(2H)-ylidene]ethyl phosphate binding. Lys-139 contributes to the 4-amino-2-methyl-5-(diphosphooxymethyl)pyrimidine binding site. Residues Ala-167 and 187-188 (VS) each bind 2-[(2R,5Z)-2-carboxy-4-methylthiazol-5(2H)-ylidene]ethyl phosphate.

This sequence belongs to the thiamine-phosphate synthase family. Mg(2+) is required as a cofactor.

The catalysed reaction is 2-[(2R,5Z)-2-carboxy-4-methylthiazol-5(2H)-ylidene]ethyl phosphate + 4-amino-2-methyl-5-(diphosphooxymethyl)pyrimidine + 2 H(+) = thiamine phosphate + CO2 + diphosphate. The enzyme catalyses 2-(2-carboxy-4-methylthiazol-5-yl)ethyl phosphate + 4-amino-2-methyl-5-(diphosphooxymethyl)pyrimidine + 2 H(+) = thiamine phosphate + CO2 + diphosphate. It catalyses the reaction 4-methyl-5-(2-phosphooxyethyl)-thiazole + 4-amino-2-methyl-5-(diphosphooxymethyl)pyrimidine + H(+) = thiamine phosphate + diphosphate. The protein operates within cofactor biosynthesis; thiamine diphosphate biosynthesis; thiamine phosphate from 4-amino-2-methyl-5-diphosphomethylpyrimidine and 4-methyl-5-(2-phosphoethyl)-thiazole: step 1/1. Its function is as follows. Condenses 4-methyl-5-(beta-hydroxyethyl)thiazole monophosphate (THZ-P) and 2-methyl-4-amino-5-hydroxymethyl pyrimidine pyrophosphate (HMP-PP) to form thiamine monophosphate (TMP). In Solidesulfovibrio magneticus (strain ATCC 700980 / DSM 13731 / RS-1) (Desulfovibrio magneticus), this protein is Thiamine-phosphate synthase.